We begin with the raw amino-acid sequence, 797 residues long: LVKDDMSLILSSFSLFRSSRSSPASASLAGSGHPRTTPPKIASLQSPMVEETKERIAKLFKKKEVSRSTYDTAWVGMVPSPFSSEEPCFPDCLFWLLQNQCPDGSWAQPHHHSLSPSLLNKDVLSSTLASILALQKWGLGQRHIAKGLHFLELNFASATDNSQITPLGFDIVFPAMLDYAADLSLNLRLDPTTLNDLMNRRDSELKRCTENGSAETEVYLAYIGEGMGKLHDWETVMKYQRKNGSLFNSPSTTAAAFIALGNSDCLKYLNSALKKFGSAVPAVYPLDIYSQLCIVDNLERLGISRFFSTEIQSVLDDTYRCWLQGDEEIFMDASTCGLAFRTLRMNGYKVTSDSFIKVVQDCFSSSSPGHMRDVNTTLELYRASELMLYPHEIELEKQNSRLRSLLEQELSGGSIQSSQLNAEVKQALDYPFYAVLDRMAKKKTIEHYNIDDSRILKTSFCLPSFGNKDLLSLSVQDYNRCQAIHREELREFDRWFVENRLDELEFARHKSAYYYCYFAAAATFFAPELSDARMSWAKNALMTTMVDDLFDVTGSVEEMKNLIQLVELWDVDVSTECRSHKVQILFSALKRTICEVGDRAHQLQGRSIRSHIIVIWLDLLHSMMKEVEWSRDKFVPTMDEYVSNAYVSFALGPIVLPALYLVGPKLSEEMVNHSEYHNLFKLMSMCGRLLNDIRGYEREHDDGKLNAMSLYIMNNGGEITPEVAIMEIKSWNDRQRRELLRLVLEEKSVIPKACKDLFWHMCSVVHLFYNKDDGFWSQELIEVVNQVIHQPILLSHF.

Residues 1–48 (LVKDDMSLILSSFSLFRSSRSSPASASLAGSGHPRTTPPKIASLQSPM) constitute a chloroplast transit peptide. A compositionally biased stretch (low complexity) spans 21 to 32 (SSPASASLAGSG). The interval 21–47 (SSPASASLAGSGHPRTTPPKIASLQSP) is disordered. Positions 547, 551, 691, and 699 each coordinate Mg(2+). The DDXXD motif signature appears at 547–551 (DDLFD).

The protein belongs to the terpene synthase family. It depends on Mg(2+) as a cofactor.

It is found in the plastid. It localises to the chloroplast. The enzyme catalyses ent-copalyl diphosphate = ent-atiserene + diphosphate. The protein operates within secondary metabolite biosynthesis; terpenoid biosynthesis. Functionally, involved in the biosynthesis of ent-kaurene diterpenoids natural products such as oridonin, miltiradiene, eriocalyxin B and nezukol, known to exhibit antitumor, anti-inflammatory and antibacterial activities. Catalyzes the conversion of ent-copalyl diphosphate (ent-CPP) to ent-atiserene. This Isodon japonicus (Scutellaria japonica) protein is Ent-atiserene synthase KSL1, chloroplastic.